Here is a 313-residue protein sequence, read N- to C-terminus: Ribosomal RNA small subunit methyltransferase H (313 aa).

S-adenosyl-L-methionine is bound by residues 35–37 (GGH), aspartate 55, phenylalanine 80, aspartate 102, and glutamine 109.

It belongs to the methyltransferase superfamily. RsmH family.

The protein resides in the cytoplasm. The catalysed reaction is cytidine(1402) in 16S rRNA + S-adenosyl-L-methionine = N(4)-methylcytidine(1402) in 16S rRNA + S-adenosyl-L-homocysteine + H(+). Functionally, specifically methylates the N4 position of cytidine in position 1402 (C1402) of 16S rRNA. The polypeptide is Ribosomal RNA small subunit methyltransferase H (Shewanella woodyi (strain ATCC 51908 / MS32)).